Here is a 178-residue protein sequence, read N- to C-terminus: N-alpha-acetyltransferase 20 (178 aa).

One can recognise an N-acetyltransferase domain in the interval 2-157 (TTLRAFTCDD…DAYDMRKALS (156 aa)). Residues 159–178 (DTEKKSIVPLPHPVRPEDIE) are disordered.

Belongs to the acetyltransferase family. ARD1 subfamily. As to quaternary structure, component of the N-terminal acetyltransferase B (NatB) complex which is composed of naa20 and naa25.

It localises to the cytoplasm. It is found in the nucleus. The catalysed reaction is N-terminal L-methionyl-L-asparaginyl-[protein] + acetyl-CoA = N-terminal N(alpha)-acetyl-L-methionyl-L-asparaginyl-[protein] + CoA + H(+). It catalyses the reaction N-terminal L-methionyl-L-glutaminyl-[protein] + acetyl-CoA = N-terminal N(alpha)-acetyl-L-methionyl-L-glutaminyl-[protein] + CoA + H(+). The enzyme catalyses N-terminal L-methionyl-L-aspartyl-[protein] + acetyl-CoA = N-terminal N(alpha)-acetyl-L-methionyl-L-aspartyl-[protein] + CoA + H(+). It carries out the reaction N-terminal L-methionyl-L-glutamyl-[protein] + acetyl-CoA = N-terminal N(alpha)-acetyl-L-methionyl-L-glutamyl-[protein] + CoA + H(+). Catalytic subunit of the NatB complex which catalyzes acetylation of the N-terminal methionine residues of peptides beginning with Met-Asp, Met-Glu, Met-Asn and Met-Gln. Proteins with cell cycle functions are overrepresented in the pool of NatB substrates. Required for maintaining the structure and function of actomyosin fibers and for proper cellular migration. The sequence is that of N-alpha-acetyltransferase 20 (naa20) from Xenopus laevis (African clawed frog).